The primary structure comprises 228 residues: Elongation factor 1-beta 1 (228 aa).

Alanine 2 carries the post-translational modification N-acetylalanine. The region spanning 14-65 (LKTLEEHLAGKTYISGDQLSVDDVKVYAAVLENPGDGFPNASKWYDSVASHL) is the GST C-terminal domain. A disordered region spans residues 75 to 139 (GVRVGGGVAP…DTKKTKESGK (65 aa)). Acidic residues predominate over residues 95–115 (PAADGDGDDDDDIDLFADETE). Residues 116–138 (DEKKAAEEREAAKKDTKKTKESG) show a composition bias toward basic and acidic residues.

This sequence belongs to the EF-1-beta/EF-1-delta family. EF-1 is composed of 4 subunits: alpha, beta (1B-alpha=beta'), delta (1B-beta), and gamma (1B-gamma).

Its subcellular location is the cell membrane. Its function is as follows. EF-1-beta and EF-1-delta stimulate the exchange of GDP bound to EF-1-alpha to GTP. The polypeptide is Elongation factor 1-beta 1 (Arabidopsis thaliana (Mouse-ear cress)).